The following is a 274-amino-acid chain: MDRTRKQCSVLAFTDDAVLPVSTIVNAVRELGNEGAEQCDPQVVTQASSLSKLPVDSSSMDIVISICRSLQFQGDFLFEEISRVLKPGGTVLIYKTLQSVAEGTSEAVLALERKLLLAGFLEAQGLQLNSLELSGLDHSFGMKAKKPSWKIGSSFALKKSTKGSVKVNLDDDLIDEDSLLTEEDMKKPPIAPGGDCEVGSTRKACKNCTCGRAEAEEKVKLGPTMEQLNNPQSACGSCGLGDAFRCSTCPYKGLPPFKLGEKVSLSGNFLAADI.

Residues 1 to 154 (MDRTRKQCSV…KKPSWKIGSS (154 aa)) form an N-terminal SAM-like domain region. Residues 154–185 (SFALKKSTKGSVKVNLDDDLIDEDSLLTEEDM) form a linker region. The [2Fe-2S] cluster site is built by cysteine 196, cysteine 205, cysteine 208, and cysteine 210. The fe-S binding site A stretch occupies residues 196–210 (CEVGSTRKACKNCTC). Positions 235, 238, 246, and 249 each coordinate [4Fe-4S] cluster. 2 short sequence motifs (cx2C motif) span residues 235-238 (CGSC) and 246-249 (CSTC). The fe-S binding site B stretch occupies residues 235–249 (CGSCGLGDAFRCSTC).

It belongs to the anamorsin family. In terms of assembly, monomer. [2Fe-2S] cluster serves as cofactor. The cofactor is [4Fe-4S] cluster.

The protein resides in the cytoplasm. It localises to the mitochondrion intermembrane space. Functionally, component of the cytosolic iron-sulfur (Fe-S) protein assembly (CIA) machinery. Required for the maturation of extramitochondrial Fe-S proteins. Part of an electron transfer chain functioning in an early step of cytosolic Fe-S biogenesis, facilitating the de novo assembly of a [4Fe-4S] cluster on the cytosolic Fe-S scaffold complex. Electrons are transferred from NADPH via a FAD- and FMN-containing diflavin oxidoreductase. Together with the diflavin oxidoreductase, also required for the assembly of the diferric tyrosyl radical cofactor of ribonucleotide reductase (RNR), probably by providing electrons for reduction during radical cofactor maturation in the catalytic small subunit. The sequence is that of Anamorsin homolog from Ricinus communis (Castor bean).